The chain runs to 122 residues: Small ribosomal subunit protein bS6 (122 aa).

The interval 97 to 122 (TAPSPMMKAVQKEDAAKSHRAEAPAA) is disordered. The segment covering 106-122 (VQKEDAAKSHRAEAPAA) has biased composition (basic and acidic residues).

This sequence belongs to the bacterial ribosomal protein bS6 family.

Its function is as follows. Binds together with bS18 to 16S ribosomal RNA. The protein is Small ribosomal subunit protein bS6 of Janthinobacterium sp. (strain Marseille) (Minibacterium massiliensis).